We begin with the raw amino-acid sequence, 21 residues long: Alpha-aminoadipic semialdehyde dehydrogenase (21 aa).

It belongs to the aldehyde dehydrogenase family. In terms of assembly, homotetramer.

It catalyses the reaction (S)-2-amino-6-oxohexanoate + NADP(+) + H2O = L-2-aminoadipate + NADPH + 2 H(+). The enzyme catalyses (S)-2-amino-6-oxohexanoate + NAD(+) + H2O = L-2-aminoadipate + NADH + 2 H(+). The protein is Alpha-aminoadipic semialdehyde dehydrogenase (aldh7a1) of Ctenopharyngodon idella (Grass carp).